Here is a 479-residue protein sequence, read N- to C-terminus: Ribulose bisphosphate carboxylase large chain (479 aa).

Positions 1-2 are excised as a propeptide; sequence MS. P3 carries the post-translational modification N-acetylproline. Residues T65, N123, 173 to 177, and 201 to 204 each bind substrate; these read TIKPK and KDDE. Residue K175 is the Proton acceptor of the active site. 3 residues coordinate Mg(2+): K201, D203, and E204. An N6-carboxylysine modification is found at K201. S208 carries the post-translational modification Phosphoserine. H294 serves as the catalytic Proton acceptor. Substrate-binding positions include 294–295 and H327; that span reads HR. T330 is modified (phosphothreonine). Residues K334 and 379–381 each bind substrate; that span reads SGG.

Belongs to the RuBisCO large chain family. Type I subfamily. As to quaternary structure, heterohexadecamer of 8 large chains and 8 small chains; disulfide-linked. The disulfide link is formed within the large subunit homodimers. Interacts with RBCX1 and RBCX1. An intermediate complex made of eight RbcL subunits interacts with the chaperone BSD2. Requires Mg(2+) as cofactor. The disulfide bond which can form in the large chain dimeric partners within the hexadecamer appears to be associated with oxidative stress and protein turnover.

The protein resides in the plastid. It localises to the chloroplast. It catalyses the reaction 2 (2R)-3-phosphoglycerate + 2 H(+) = D-ribulose 1,5-bisphosphate + CO2 + H2O. The catalysed reaction is D-ribulose 1,5-bisphosphate + O2 = 2-phosphoglycolate + (2R)-3-phosphoglycerate + 2 H(+). Its function is as follows. RuBisCO catalyzes two reactions: the carboxylation of D-ribulose 1,5-bisphosphate, the primary event in carbon dioxide fixation, as well as the oxidative fragmentation of the pentose substrate in the photorespiration process. Both reactions occur simultaneously and in competition at the same active site. Binds to abscisic acid (ABA). This is Ribulose bisphosphate carboxylase large chain from Arabidopsis thaliana (Mouse-ear cress).